The following is a 129-amino-acid chain: Small ribosomal subunit protein uS11 (129 aa).

It belongs to the universal ribosomal protein uS11 family. As to quaternary structure, part of the 30S ribosomal subunit. Interacts with proteins S7 and S18. Binds to IF-3.

Located on the platform of the 30S subunit, it bridges several disparate RNA helices of the 16S rRNA. Forms part of the Shine-Dalgarno cleft in the 70S ribosome. This is Small ribosomal subunit protein uS11 from Listeria innocua serovar 6a (strain ATCC BAA-680 / CLIP 11262).